The sequence spans 351 residues: Nitronate monooxygenase (351 aa).

FMN contacts are provided by residues leucine 21, asparagine 69, glutamine 176, glycine 181, glycine 218, and 237–240; that span reads QMGT.

It belongs to the nitronate monooxygenase family. NMO class I subfamily. The cofactor is FMN.

It carries out the reaction 3 propionate 3-nitronate + 3 O2 + H2O = 3 3-oxopropanoate + 2 nitrate + nitrite + H2O2 + 3 H(+). In terms of biological role, nitronate monooxygenase that uses molecular oxygen to catalyze the oxidative denitrification of alkyl nitronates. The toxin propionate 3-nitronate (P3N) is the best substrate (and the presumed physiological substrate), but this enzyme is also active on other primary and secondary nitronates such as propyl-1-nitronate, ethylnitronate, pentyl-1-nitronate, butyl-1-nitronate and propyl-2-nitronate. Is likely involved in the degradation of P3N, that allows P.aeruginosa PAO1 to grow on 3-nitropropionate/P3N as the sole nitrogen source. Also functions in the detoxification of P3N, a metabolic poison produced by plants and fungi as a defense mechanism. Cannot oxidize nitroalkanes such as 3-nitropropionate, nitroethane, 1-nitropropane, 1-nitrobutane, 1-nitropentane, or 2-nitropropane. The protein is Nitronate monooxygenase of Pseudomonas aeruginosa (strain ATCC 15692 / DSM 22644 / CIP 104116 / JCM 14847 / LMG 12228 / 1C / PRS 101 / PAO1).